Consider the following 125-residue polypeptide: Small ribosomal subunit protein mS41 (125 aa).

A mitochondrion-targeting transit peptide spans 1–10 (MLSIFGCVRA). Residues 103–125 (SFFGGERNRKATVAKWRAEQRNK) are disordered.

The protein belongs to the mitochondrion-specific ribosomal protein mS41 family.

Its subcellular location is the mitochondrion. Involved in telomere length regulation. The chain is Small ribosomal subunit protein mS41 (FYV4) from Candida glabrata (strain ATCC 2001 / BCRC 20586 / JCM 3761 / NBRC 0622 / NRRL Y-65 / CBS 138) (Yeast).